The sequence spans 464 residues: Kynureninase (464 aa).

Met1 is modified (N-acetylmethionine). Residues Leu137, Thr138, 165–168, Ser221, Asp250, His253, and Tyr275 contribute to the pyridoxal 5'-phosphate site; that span reads FPSD. The residue at position 276 (Lys276) is an N6-(pyridoxal phosphate)lysine. The pyridoxal 5'-phosphate site is built by Trp305 and Asn333.

It belongs to the kynureninase family. As to quaternary structure, homodimer. The cofactor is pyridoxal 5'-phosphate.

It is found in the cytoplasm. Its subcellular location is the cytosol. The enzyme catalyses L-kynurenine + H2O = anthranilate + L-alanine + H(+). The catalysed reaction is 3-hydroxy-L-kynurenine + H2O = 3-hydroxyanthranilate + L-alanine + H(+). It functions in the pathway amino-acid degradation; L-kynurenine degradation; L-alanine and anthranilate from L-kynurenine: step 1/1. It participates in cofactor biosynthesis; NAD(+) biosynthesis; quinolinate from L-kynurenine: step 2/3. Functionally, catalyzes the cleavage of L-kynurenine (L-Kyn) and L-3-hydroxykynurenine (L-3OHKyn) into anthranilic acid (AA) and 3-hydroxyanthranilic acid (3-OHAA), respectively. Has a preference for the L-3-hydroxy form. Also has cysteine-conjugate-beta-lyase activity. The chain is Kynureninase (Kynu) from Mus musculus (Mouse).